A 153-amino-acid polypeptide reads, in one-letter code: Ribosomal RNA large subunit methyltransferase H (153 aa).

S-adenosyl-L-methionine is bound by residues leucine 70, glycine 102, and 121–126 (LSRMTF).

It belongs to the RNA methyltransferase RlmH family. As to quaternary structure, homodimer.

It localises to the cytoplasm. It catalyses the reaction pseudouridine(1915) in 23S rRNA + S-adenosyl-L-methionine = N(3)-methylpseudouridine(1915) in 23S rRNA + S-adenosyl-L-homocysteine + H(+). Specifically methylates the pseudouridine at position 1915 (m3Psi1915) in 23S rRNA. The chain is Ribosomal RNA large subunit methyltransferase H from Geotalea uraniireducens (strain Rf4) (Geobacter uraniireducens).